The sequence spans 141 residues: Lutropin subunit beta (141 aa).

Positions 1 to 20 (MEMFQGLLLWLLLGVAGVWA) are cleaved as a signal peptide. Cystine bridges form between Cys29–Cys77, Cys43–Cys92, Cys46–Cys130, Cys54–Cys108, Cys58–Cys110, and Cys113–Cys120. The N-linked (GlcNAc...) asparagine glycan is linked to Asn33.

This sequence belongs to the glycoprotein hormones subunit beta family. As to quaternary structure, heterodimer of a common alpha chain and a unique beta chain which confers biological specificity to thyrotropin, lutropin, follitropin and gonadotropin.

The protein resides in the secreted. In terms of biological role, promotes spermatogenesis and ovulation by stimulating the testes and ovaries to synthesize steroids. This Bos taurus (Bovine) protein is Lutropin subunit beta (LHB).